The chain runs to 184 residues: Photosystem I assembly protein Ycf4 (184 aa).

Transmembrane regions (helical) follow at residues 22-42 and 57-77; these read FCWA…GTSS and IIFF…LFIS.

The protein belongs to the Ycf4 family.

Its subcellular location is the plastid. It localises to the chloroplast thylakoid membrane. Functionally, seems to be required for the assembly of the photosystem I complex. The protein is Photosystem I assembly protein Ycf4 of Capsella bursa-pastoris (Shepherd's purse).